Here is a 115-residue protein sequence, read N- to C-terminus: UPF0597 protein HI_0855 (115 aa).

This sequence belongs to the UPF0597 family.

This is UPF0597 protein HI_0855 from Haemophilus influenzae (strain ATCC 51907 / DSM 11121 / KW20 / Rd).